Consider the following 354-residue polypeptide: Glycerol-1-phosphate dehydrogenase [NAD(P)+] (354 aa).

NAD(+) is bound by residues 102–106 (GRSID) and 124–127 (TAAS). Asp-129 lines the substrate pocket. Ser-133 lines the NAD(+) pocket. Substrate is bound at residue Asp-176. Positions 176 and 256 each coordinate Zn(2+). A substrate-binding site is contributed by His-260. His-272 serves as a coordination point for Zn(2+).

Belongs to the glycerol-1-phosphate dehydrogenase family. Zn(2+) is required as a cofactor.

The protein localises to the cytoplasm. The enzyme catalyses sn-glycerol 1-phosphate + NAD(+) = dihydroxyacetone phosphate + NADH + H(+). It carries out the reaction sn-glycerol 1-phosphate + NADP(+) = dihydroxyacetone phosphate + NADPH + H(+). It functions in the pathway membrane lipid metabolism; glycerophospholipid metabolism. Catalyzes the NAD(P)H-dependent reduction of dihydroxyacetonephosphate (DHAP or glycerone phosphate) to glycerol 1-phosphate (G1P). The G1P thus generated is used as the glycerophosphate backbone of phospholipids in the cellular membranes of Archaea. This chain is Glycerol-1-phosphate dehydrogenase [NAD(P)+], found in Methanothrix thermoacetophila (strain DSM 6194 / JCM 14653 / NBRC 101360 / PT) (Methanosaeta thermophila).